Reading from the N-terminus, the 681-residue chain is Methionine--tRNA ligase (681 aa).

The 'HIGH' region motif lies at P18 to H28. The Zn(2+) site is built by C149, C152, C162, and C165. Residues K334–S338 carry the 'KMSKS' region motif. Position 337 (K337) interacts with ATP. Residues D580–S681 form the tRNA-binding domain.

This sequence belongs to the class-I aminoacyl-tRNA synthetase family. MetG type 1 subfamily. Homodimer. Zn(2+) serves as cofactor.

The protein localises to the cytoplasm. It catalyses the reaction tRNA(Met) + L-methionine + ATP = L-methionyl-tRNA(Met) + AMP + diphosphate. Its function is as follows. Is required not only for elongation of protein synthesis but also for the initiation of all mRNA translation through initiator tRNA(fMet) aminoacylation. The sequence is that of Methionine--tRNA ligase from Chromohalobacter salexigens (strain ATCC BAA-138 / DSM 3043 / CIP 106854 / NCIMB 13768 / 1H11).